We begin with the raw amino-acid sequence, 441 residues long: Thymidine phosphorylase (441 aa).

It belongs to the thymidine/pyrimidine-nucleoside phosphorylase family. In terms of assembly, homodimer.

The catalysed reaction is thymidine + phosphate = 2-deoxy-alpha-D-ribose 1-phosphate + thymine. It functions in the pathway pyrimidine metabolism; dTMP biosynthesis via salvage pathway; dTMP from thymine: step 1/2. Functionally, the enzymes which catalyze the reversible phosphorolysis of pyrimidine nucleosides are involved in the degradation of these compounds and in their utilization as carbon and energy sources, or in the rescue of pyrimidine bases for nucleotide synthesis. The polypeptide is Thymidine phosphorylase (Chromobacterium violaceum (strain ATCC 12472 / DSM 30191 / JCM 1249 / CCUG 213 / NBRC 12614 / NCIMB 9131 / NCTC 9757 / MK)).